A 360-amino-acid polypeptide reads, in one-letter code: Phospho-N-acetylmuramoyl-pentapeptide-transferase (360 aa).

10 consecutive transmembrane segments (helical) span residues G27–L47, T71–A91, L93–F113, F128–I148, L168–G188, G199–S219, L239–P259, A262–V282, I288–V308, and Q337–L357.

This sequence belongs to the glycosyltransferase 4 family. MraY subfamily. It depends on Mg(2+) as a cofactor.

The protein localises to the cell inner membrane. It carries out the reaction UDP-N-acetyl-alpha-D-muramoyl-L-alanyl-gamma-D-glutamyl-meso-2,6-diaminopimeloyl-D-alanyl-D-alanine + di-trans,octa-cis-undecaprenyl phosphate = di-trans,octa-cis-undecaprenyl diphospho-N-acetyl-alpha-D-muramoyl-L-alanyl-D-glutamyl-meso-2,6-diaminopimeloyl-D-alanyl-D-alanine + UMP. It participates in cell wall biogenesis; peptidoglycan biosynthesis. Its function is as follows. Catalyzes the initial step of the lipid cycle reactions in the biosynthesis of the cell wall peptidoglycan: transfers peptidoglycan precursor phospho-MurNAc-pentapeptide from UDP-MurNAc-pentapeptide onto the lipid carrier undecaprenyl phosphate, yielding undecaprenyl-pyrophosphoryl-MurNAc-pentapeptide, known as lipid I. The protein is Phospho-N-acetylmuramoyl-pentapeptide-transferase of Brucella abortus (strain S19).